Reading from the N-terminus, the 494-residue chain is Neuronal pentraxin receptor (494 aa).

The Cytoplasmic portion of the chain corresponds to 1–2 (MK). The chain crosses the membrane as a helical; Signal-anchor for type II membrane protein span at residues 3 to 23 (FLAVLLAAGMLAFLGAVICII). Over 24 to 494 (ASVPLAASPA…FDVCKRRAKA (471 aa)) the chain is Extracellular. A disordered region spans residues 37-80 (PGGTDNASAASAAGAPGPQRSLSALQGAGGSAGPSVLPGEPAAS). Residue Asn-42 is glycosylated (N-linked (GlcNAc...) asparagine). Composition is skewed to low complexity over residues 43 to 62 (ASAA…SALQ) and 69 to 80 (GPSVLPGEPAAS). Asn-211 is a glycosylation site (N-linked (GlcNAc...) asparagine). The Pentraxin (PTX) domain occupies 286-488 (DAFKVSIPIR…GAKKAAFDVC (203 aa)). A disulfide bridge links Cys-316 with Cys-377. Ca(2+) is bound by residues Asn-341, Glu-419, Gln-420, Asp-421, and Gln-431. Asn-457 carries N-linked (GlcNAc...) asparagine glycosylation.

Interacts with KLHL2. Heteropentamer with NPTX1 and/or NPTX2. Also binds taipoxin-associated calcium-binding protein 49 (TCBP49/RCN2). The cofactor is Ca(2+). Post-translationally, N-glycosylated. Ubiquitinated by a cullin-RING-based BCR (BTB-CUL3-RBX1) E3 ubiquitin-protein ligase complex containing KLHL2. As to expression, brain specific.

The protein resides in the membrane. Functionally, may be involved in mediating uptake of synaptic material during synapse remodeling or in mediating the synaptic clustering of AMPA glutamate receptors at a subset of excitatory synapses. In Rattus norvegicus (Rat), this protein is Neuronal pentraxin receptor (Nptxr).